Consider the following 696-residue polypeptide: DNA ligase (696 aa).

NAD(+) contacts are provided by residues 36-40 (DAEYD), 85-86 (SL), and Glu123. Residue Lys125 is the N6-AMP-lysine intermediate of the active site. Residues Arg146, Glu181, Lys319, and Lys343 each coordinate NAD(+). Cys437, Cys440, Cys455, and Cys461 together coordinate Zn(2+). The region spanning 618 to 696 (PEGTSLAGKT…EDGLKALLGL (79 aa)) is the BRCT domain.

It belongs to the NAD-dependent DNA ligase family. LigA subfamily. Mg(2+) is required as a cofactor. Mn(2+) serves as cofactor.

The enzyme catalyses NAD(+) + (deoxyribonucleotide)n-3'-hydroxyl + 5'-phospho-(deoxyribonucleotide)m = (deoxyribonucleotide)n+m + AMP + beta-nicotinamide D-nucleotide.. DNA ligase that catalyzes the formation of phosphodiester linkages between 5'-phosphoryl and 3'-hydroxyl groups in double-stranded DNA using NAD as a coenzyme and as the energy source for the reaction. It is essential for DNA replication and repair of damaged DNA. In Bordetella bronchiseptica (strain ATCC BAA-588 / NCTC 13252 / RB50) (Alcaligenes bronchisepticus), this protein is DNA ligase.